The sequence spans 271 residues: S-adenosylmethionine decarboxylase proenzyme (271 aa).

S121 serves as the catalytic Schiff-base intermediate with substrate; via pyruvic acid. S121 bears the Pyruvic acid (Ser); by autocatalysis mark. H126 serves as the catalytic Proton acceptor; for processing activity. Residue C149 is the Proton donor; for catalytic activity of the active site.

This sequence belongs to the prokaryotic AdoMetDC family. Type 2 subfamily. As to quaternary structure, heterooctamer of four alpha and four beta chains arranged as a tetramer of alpha/beta heterodimers. Pyruvate serves as cofactor. Is synthesized initially as an inactive proenzyme. Formation of the active enzyme involves a self-maturation process in which the active site pyruvoyl group is generated from an internal serine residue via an autocatalytic post-translational modification. Two non-identical subunits are generated from the proenzyme in this reaction, and the pyruvate is formed at the N-terminus of the alpha chain, which is derived from the carboxyl end of the proenzyme. The post-translation cleavage follows an unusual pathway, termed non-hydrolytic serinolysis, in which the side chain hydroxyl group of the serine supplies its oxygen atom to form the C-terminus of the beta chain, while the remainder of the serine residue undergoes an oxidative deamination to produce ammonia and the pyruvoyl group blocking the N-terminus of the alpha chain.

It catalyses the reaction S-adenosyl-L-methionine + H(+) = S-adenosyl 3-(methylsulfanyl)propylamine + CO2. Its pathway is amine and polyamine biosynthesis; S-adenosylmethioninamine biosynthesis; S-adenosylmethioninamine from S-adenosyl-L-methionine: step 1/1. Its function is as follows. Catalyzes the decarboxylation of S-adenosylmethionine to S-adenosylmethioninamine (dcAdoMet), the propylamine donor required for the synthesis of the polyamines spermine and spermidine from the diamine putrescine. The chain is S-adenosylmethionine decarboxylase proenzyme from Clostridium perfringens (strain ATCC 13124 / DSM 756 / JCM 1290 / NCIMB 6125 / NCTC 8237 / Type A).